A 120-amino-acid polypeptide reads, in one-letter code: Immunoglobulin kappa variable 2-24 (120 aa).

The N-terminal stretch at 1-19 (MRLLAQLLGLLMLWVPGSS) is a signal peptide. In terms of domain architecture, Ig-like spans 20-120 (GDIVMTQTPL…YYCMQATQFP (101 aa)). Residues 21–43 (DIVMTQTPLSSPVTLGQPASISC) are framework-1. Cys43 and Cys113 are oxidised to a cystine. Positions 44 to 59 (RSSQSLVHSDGNTYLS) are complementarity-determining-1. The tract at residues 60–74 (WLQQRPGQPPRLLIY) is framework-2. Positions 75 to 81 (KISNRFS) are complementarity-determining-2. A framework-3 region spans residues 82 to 113 (GVPDRFSGSGAGTDFTLKISRVEAEDVGVYYC). The complementarity-determining-3 stretch occupies residues 114–120 (MQATQFP).

Immunoglobulins are composed of two identical heavy chains and two identical light chains; disulfide-linked.

It is found in the secreted. The protein localises to the cell membrane. In terms of biological role, v region of the variable domain of immunoglobulin light chains that participates in the antigen recognition. Immunoglobulins, also known as antibodies, are membrane-bound or secreted glycoproteins produced by B lymphocytes. In the recognition phase of humoral immunity, the membrane-bound immunoglobulins serve as receptors which, upon binding of a specific antigen, trigger the clonal expansion and differentiation of B lymphocytes into immunoglobulins-secreting plasma cells. Secreted immunoglobulins mediate the effector phase of humoral immunity, which results in the elimination of bound antigens. The antigen binding site is formed by the variable domain of one heavy chain, together with that of its associated light chain. Thus, each immunoglobulin has two antigen binding sites with remarkable affinity for a particular antigen. The variable domains are assembled by a process called V-(D)-J rearrangement and can then be subjected to somatic hypermutations which, after exposure to antigen and selection, allow affinity maturation for a particular antigen. The polypeptide is Immunoglobulin kappa variable 2-24 (Homo sapiens (Human)).